The primary structure comprises 376 residues: ATP synthase gamma chain, chloroplastic (376 aa).

The N-terminal 52 residues, 1 to 52 (MSCSNVTMLVSSKPSLPDASNLSFRSAFNPFQLPSQNSSSSCTPSRPTSIQC), are a transit peptide targeting the chloroplast. Cysteine 133 is a catalytic residue. Cysteines 250 and 256 form a disulfide.

Belongs to the ATPase gamma chain family. As to quaternary structure, F-type ATPases have 2 components, CF(1) - the catalytic core - and CF(0) - the membrane proton channel. CF(1) has five subunits: alpha(3), beta(3), gamma(1), delta(1), epsilon(1). CF(0) has four main subunits: a, b, b' and c.

Its subcellular location is the plastid. It is found in the chloroplast thylakoid membrane. Its function is as follows. Produces ATP from ADP in the presence of a proton gradient across the membrane. The gamma chain is believed to be important in regulating ATPase activity and the flow of protons through the CF(0) complex. This is ATP synthase gamma chain, chloroplastic (ATPC) from Pisum sativum (Garden pea).